A 194-amino-acid chain; its full sequence is dTTP/UTP pyrophosphatase (194 aa).

Aspartate 73 acts as the Proton acceptor in catalysis.

Belongs to the Maf family. YhdE subfamily. A divalent metal cation is required as a cofactor.

Its subcellular location is the cytoplasm. The catalysed reaction is dTTP + H2O = dTMP + diphosphate + H(+). It carries out the reaction UTP + H2O = UMP + diphosphate + H(+). Nucleoside triphosphate pyrophosphatase that hydrolyzes dTTP and UTP. May have a dual role in cell division arrest and in preventing the incorporation of modified nucleotides into cellular nucleic acids. This is dTTP/UTP pyrophosphatase from Clostridium botulinum (strain Okra / Type B1).